A 635-amino-acid polypeptide reads, in one-letter code: Chaperone protein HtpG (635 aa).

The segment at 1-343 is a; substrate-binding; it reads MSVETQKETL…SNDLSLNVSR (343 aa). Positions 344–560 are b; sequence EILQKDPIID…EQDMGLQMRQ (217 aa). Residues 561–635 are c; sequence ILEASGQKVP…LNKLLVELSV (75 aa).

The protein belongs to the heat shock protein 90 family. In terms of assembly, homodimer.

The protein localises to the cytoplasm. Molecular chaperone. Has ATPase activity. This is Chaperone protein HtpG from Pseudomonas syringae pv. tomato (strain ATCC BAA-871 / DC3000).